The primary structure comprises 261 residues: Cytochrome c oxidase subunit 3 (261 aa).

Residues 1-15 (MTHQTHAYHMVNPSP) lie on the Mitochondrial matrix side of the membrane. The helical transmembrane segment at 16–34 (WPLTGALSALLLTSGLMMW) threads the bilayer. Residues 35 to 40 (FHFNNP) lie on the Mitochondrial intermembrane side of the membrane. Residues 41–66 (TLLVLGLLTNLISSYQWWRDIVREGT) traverse the membrane as a helical segment. The Mitochondrial matrix portion of the chain corresponds to 67–72 (YQGHHT). The chain crosses the membrane as a helical span at residues 73–105 (KVVQKGLRYGMVLFIISEVFFFLGFFWAFYHSS). Residues 106 to 128 (LAPTPELGGCWPPTGISPLNPLE) lie on the Mitochondrial intermembrane side of the membrane. Residues 129-152 (VPLLNTSILLASGVSITWSHHSLM) form a helical membrane-spanning segment. Topologically, residues 153-155 (EGN) are mitochondrial matrix. Residues 156-183 (RKQMIQALMITIALGLYFTALQAMEYYE) form a helical membrane-spanning segment. The Mitochondrial intermembrane portion of the chain corresponds to 184 to 190 (SSFTISD). The helical transmembrane segment at 191 to 223 (GVYGSTFFVATGFHGLHVIIGTTFLITCLLRQL) threads the bilayer. Residues 224–232 (LYHFTSNHH) are Mitochondrial matrix-facing. A helical transmembrane segment spans residues 233–256 (FGFEAAAWYWHFVDVVWLFLYVSI). Topologically, residues 257–261 (YWWGS) are mitochondrial intermembrane.

Belongs to the cytochrome c oxidase subunit 3 family. Component of the cytochrome c oxidase (complex IV, CIV), a multisubunit enzyme composed of 14 subunits. The complex is composed of a catalytic core of 3 subunits MT-CO1, MT-CO2 and MT-CO3, encoded in the mitochondrial DNA, and 11 supernumerary subunits COX4I, COX5A, COX5B, COX6A, COX6B, COX6C, COX7A, COX7B, COX7C, COX8 and NDUFA4, which are encoded in the nuclear genome. The complex exists as a monomer or a dimer and forms supercomplexes (SCs) in the inner mitochondrial membrane with NADH-ubiquinone oxidoreductase (complex I, CI) and ubiquinol-cytochrome c oxidoreductase (cytochrome b-c1 complex, complex III, CIII), resulting in different assemblies (supercomplex SCI(1)III(2)IV(1) and megacomplex MCI(2)III(2)IV(2)).

The protein resides in the mitochondrion inner membrane. The enzyme catalyses 4 Fe(II)-[cytochrome c] + O2 + 8 H(+)(in) = 4 Fe(III)-[cytochrome c] + 2 H2O + 4 H(+)(out). Functionally, component of the cytochrome c oxidase, the last enzyme in the mitochondrial electron transport chain which drives oxidative phosphorylation. The respiratory chain contains 3 multisubunit complexes succinate dehydrogenase (complex II, CII), ubiquinol-cytochrome c oxidoreductase (cytochrome b-c1 complex, complex III, CIII) and cytochrome c oxidase (complex IV, CIV), that cooperate to transfer electrons derived from NADH and succinate to molecular oxygen, creating an electrochemical gradient over the inner membrane that drives transmembrane transport and the ATP synthase. Cytochrome c oxidase is the component of the respiratory chain that catalyzes the reduction of oxygen to water. Electrons originating from reduced cytochrome c in the intermembrane space (IMS) are transferred via the dinuclear copper A center (CU(A)) of subunit 2 and heme A of subunit 1 to the active site in subunit 1, a binuclear center (BNC) formed by heme A3 and copper B (CU(B)). The BNC reduces molecular oxygen to 2 water molecules using 4 electrons from cytochrome c in the IMS and 4 protons from the mitochondrial matrix. The polypeptide is Cytochrome c oxidase subunit 3 (MT-CO3) (Tachyglossus aculeatus aculeatus (Southeast Australian short-beaked echidna)).